Consider the following 1435-residue polypeptide: Gag-Pol polyprotein (1435 aa).

Gly-2 is lipidated: N-myristoyl glycine; by host. An interaction with Gp41 region spans residues 7-31 (VLSGGKLDKWEKIRLRPGGKKKYRL). An interaction with host CALM1 region spans residues 8–43 (LSGGKLDKWEKIRLRPGGKKKYRLKHIVWASRELER). The tract at residues 12-19 (KLDKWEKI) is interaction with host AP3D1. Residues 14–33 (DKWEKIRLRPGGKKKYRLKH) form an interaction with membrane phosphatidylinositol 4,5-bisphosphate and RNA region. A Nuclear export signal motif is present at residues 16–22 (WEKIRLR). A Nuclear localization signal motif is present at residues 26–32 (KKKYRLK). The interaction with membrane phosphatidylinositol 4,5-bisphosphate stretch occupies residues 73 to 77 (EELRS). Residues 102 to 128 (EKMEEEQNKSKKKAQQAAADTGNNSQV) are disordered. The residue at position 132 (Tyr-132) is a Phosphotyrosine; by host. Residues 189 to 227 (NTVGGHQAAMQMLKETINEEAAEWDRLHPVHAGPIAPGQ) are interaction with human PPIA/CYPA and NUP153. Residues 277-363 (YSPVSILDIR…GGPSHKARVL (87 aa)) form a dimerization/Multimerization of capsid protein p24 region. 2 consecutive CCHC-type zinc fingers follow at residues 391-408 (IKCF…NCRA) and 412-429 (KGCW…DCTE). The interval 489–493 (PQITL) is dimerization of protease. Residues 508–577 (KEALLDTGAD…TPVNIIGRNL (70 aa)) form the Peptidase A2 domain. Asp-513 serves as the catalytic For protease activity; shared with dimeric partner. 2 dimerization of protease regions span residues 537–543 (GIGGFIK) and 576–588 (NLLT…LNFP). Residues 631 to 821 (EGKISRIGPE…PPFLWMGYEL (191 aa)) enclose the Reverse transcriptase domain. Positions 697, 772, and 773 each coordinate Mg(2+). The segment at 814-822 (FLWMGYELH) is RT 'primer grip'. The short motif at 985–1001 (WETWWAEYWQATWIPEW) is the Tryptophan repeat motif element. Residues 1021–1144 (IIGAETFYVD…VDKLVSQGIR (124 aa)) form the RNase H type-1 domain. Residues Asp-1030, Glu-1065, Asp-1085, and Asp-1136 each coordinate Mg(2+). The Integrase-type zinc finger occupies 1150–1191 (DGIDKAQEEHEKYHNNWRAMASDFNLPPVVAKEIVASCDKCQ). Positions 1159, 1163, 1187, and 1190 each coordinate Zn(2+). The 151-residue stretch at 1201-1351 (VDCSPGIWQL…SAGERIIDII (151 aa)) folds into the Integrase catalytic domain. The Mg(2+) site is built by Asp-1211, Asp-1263, and Glu-1299. Residues 1370–1417 (FRVYYRDSRDPIWKGPAKLLWKGEGAVVIQDKSDIKVVPRRKVKIIRD) constitute a DNA-binding region (integrase-type).

In terms of assembly, homotrimer; further assembles as hexamers of trimers. Interacts with gp41 (via C-terminus). Interacts with host CALM1; this interaction induces a conformational change in the Matrix protein, triggering exposure of the myristate group. Interacts with host AP3D1; this interaction allows the polyprotein trafficking to multivesicular bodies during virus assembly. Part of the pre-integration complex (PIC) which is composed of viral genome, matrix protein, Vpr and integrase. As to quaternary structure, homodimer; the homodimer further multimerizes as homohexamers or homopentamers. Interacts with human PPIA/CYPA; This interaction stabilizes the capsid. Interacts with human NUP153. Interacts with host PDZD8; this interaction stabilizes the capsid. Interacts with monkey TRIM5; this interaction destabilizes the capsid. Homodimer, whose active site consists of two apposed aspartic acid residues. In terms of assembly, heterodimer of p66 RT and p51 RT (RT p66/p51). Heterodimerization of RT is essential for DNA polymerase activity. The overall folding of the subdomains is similar in p66 RT and p51 RT but the spatial arrangements of the subdomains are dramatically different. As to quaternary structure, homotetramer; may further associate as a homohexadecamer. Part of the pre-integration complex (PIC) which is composed of viral genome, matrix protein, Vpr and integrase. Interacts with human SMARCB1/INI1 and human PSIP1/LEDGF isoform 1. Interacts with human KPNA3; this interaction might play a role in nuclear import of the pre-integration complex. Interacts with human NUP153; this interaction might play a role in nuclear import of the pre-integration complex. The cofactor is Mg(2+). In terms of processing, specific enzymatic cleavages by the viral protease yield mature proteins. The protease is released by autocatalytic cleavage. The polyprotein is cleaved during and after budding, this process is termed maturation. Proteolytic cleavage of p66 RT removes the RNase H domain to yield the p51 RT subunit. Nucleocapsid protein p7 might be further cleaved after virus entry. Tyrosine phosphorylated presumably in the virion by a host kinase. Phosphorylation is apparently not a major regulator of membrane association. Post-translationally, phosphorylated possibly by host MAPK1; this phosphorylation is necessary for Pin1-mediated virion uncoating. In terms of processing, methylated by host PRMT6, impairing its function by reducing RNA annealing and the initiation of reverse transcription.

Its subcellular location is the host cell membrane. It is found in the host endosome. It localises to the host multivesicular body. The protein localises to the virion membrane. The protein resides in the host nucleus. Its subcellular location is the host cytoplasm. It is found in the virion. It catalyses the reaction Specific for a P1 residue that is hydrophobic, and P1' variable, but often Pro.. The catalysed reaction is Endohydrolysis of RNA in RNA/DNA hybrids. Three different cleavage modes: 1. sequence-specific internal cleavage of RNA. Human immunodeficiency virus type 1 and Moloney murine leukemia virus enzymes prefer to cleave the RNA strand one nucleotide away from the RNA-DNA junction. 2. RNA 5'-end directed cleavage 13-19 nucleotides from the RNA end. 3. DNA 3'-end directed cleavage 15-20 nucleotides away from the primer terminus.. The enzyme catalyses 3'-end directed exonucleolytic cleavage of viral RNA-DNA hybrid.. It carries out the reaction DNA(n) + a 2'-deoxyribonucleoside 5'-triphosphate = DNA(n+1) + diphosphate. Its activity is regulated as follows. Protease: The viral protease is inhibited by many synthetic protease inhibitors (PIs), such as amprenavir, atazanavir, indinavir, loprinavir, nelfinavir, ritonavir and saquinavir. Use of protease inhibitors in tritherapy regimens permit more ambitious therapeutic strategies. Reverse transcriptase/ribonuclease H: RT can be inhibited either by nucleoside RT inhibitors (NRTIs) or by non nucleoside RT inhibitors (NNRTIs). NRTIs act as chain terminators, whereas NNRTIs inhibit DNA polymerization by binding a small hydrophobic pocket near the RT active site and inducing an allosteric change in this region. Classical NRTIs are abacavir, adefovir (PMEA), didanosine (ddI), lamivudine (3TC), stavudine (d4T), tenofovir (PMPA), zalcitabine (ddC), and zidovudine (AZT). Classical NNRTIs are atevirdine (BHAP U-87201E), delavirdine, efavirenz (DMP-266), emivirine (I-EBU), and nevirapine (BI-RG-587). The tritherapies used as a basic effective treatment of AIDS associate two NRTIs and one NNRTI. Its function is as follows. Mediates, with Gag polyprotein, the essential events in virion assembly, including binding the plasma membrane, making the protein-protein interactions necessary to create spherical particles, recruiting the viral Env proteins, and packaging the genomic RNA via direct interactions with the RNA packaging sequence (Psi). Gag-Pol polyprotein may regulate its own translation, by the binding genomic RNA in the 5'-UTR. At low concentration, the polyprotein would promote translation, whereas at high concentration, the polyprotein would encapsidate genomic RNA and then shut off translation. In terms of biological role, targets the polyprotein to the plasma membrane via a multipartite membrane-binding signal, that includes its myristoylated N-terminus. Matrix protein is part of the pre-integration complex. Implicated in the release from host cell mediated by Vpu. Binds to RNA. Functionally, forms the conical core that encapsulates the genomic RNA-nucleocapsid complex in the virion. Most core are conical, with only 7% tubular. The core is constituted by capsid protein hexamer subunits. The core is disassembled soon after virion entry. Host restriction factors such as TRIM5-alpha or TRIMCyp bind retroviral capsids and cause premature capsid disassembly, leading to blocks in reverse transcription. Capsid restriction by TRIM5 is one of the factors which restricts HIV-1 to the human species. Host PIN1 apparently facilitates the virion uncoating. On the other hand, interactions with PDZD8 or CYPA stabilize the capsid. Encapsulates and protects viral dimeric unspliced genomic RNA (gRNA). Binds these RNAs through its zinc fingers. Acts as a nucleic acid chaperone which is involved in rearangement of nucleic acid secondary structure during gRNA retrotranscription. Also facilitates template switch leading to recombination. As part of the polyprotein, participates in gRNA dimerization, packaging, tRNA incorporation and virion assembly. Its function is as follows. Aspartyl protease that mediates proteolytic cleavages of Gag and Gag-Pol polyproteins during or shortly after the release of the virion from the plasma membrane. Cleavages take place as an ordered, step-wise cascade to yield mature proteins. This process is called maturation. Displays maximal activity during the budding process just prior to particle release from the cell. Also cleaves Nef and Vif, probably concomitantly with viral structural proteins on maturation of virus particles. Hydrolyzes host EIF4GI and PABP1 in order to shut off the capped cellular mRNA translation. The resulting inhibition of cellular protein synthesis serves to ensure maximal viral gene expression and to evade host immune response. Also mediates cleavage of host YTHDF3. Mediates cleavage of host CARD8, thereby activating the CARD8 inflammasome, leading to the clearance of latent HIV-1 in patient CD4(+) T-cells after viral reactivation; in contrast, HIV-1 can evade CARD8-sensing when its protease remains inactive in infected cells prior to viral budding. In terms of biological role, multifunctional enzyme that converts the viral RNA genome into dsDNA in the cytoplasm, shortly after virus entry into the cell. This enzyme displays a DNA polymerase activity that can copy either DNA or RNA templates, and a ribonuclease H (RNase H) activity that cleaves the RNA strand of RNA-DNA heteroduplexes in a partially processive 3' to 5' endonucleasic mode. Conversion of viral genomic RNA into dsDNA requires many steps. A tRNA(3)-Lys binds to the primer-binding site (PBS) situated at the 5'-end of the viral RNA. RT uses the 3' end of the tRNA primer to perform a short round of RNA-dependent minus-strand DNA synthesis. The reading proceeds through the U5 region and ends after the repeated (R) region which is present at both ends of viral RNA. The portion of the RNA-DNA heteroduplex is digested by the RNase H, resulting in a ssDNA product attached to the tRNA primer. This ssDNA/tRNA hybridizes with the identical R region situated at the 3' end of viral RNA. This template exchange, known as minus-strand DNA strong stop transfer, can be either intra- or intermolecular. RT uses the 3' end of this newly synthesized short ssDNA to perform the RNA-dependent minus-strand DNA synthesis of the whole template. RNase H digests the RNA template except for two polypurine tracts (PPTs) situated at the 5'-end and near the center of the genome. It is not clear if both polymerase and RNase H activities are simultaneous. RNase H probably can proceed both in a polymerase-dependent (RNA cut into small fragments by the same RT performing DNA synthesis) and a polymerase-independent mode (cleavage of remaining RNA fragments by free RTs). Secondly, RT performs DNA-directed plus-strand DNA synthesis using the PPTs that have not been removed by RNase H as primers. PPTs and tRNA primers are then removed by RNase H. The 3' and 5' ssDNA PBS regions hybridize to form a circular dsDNA intermediate. Strand displacement synthesis by RT to the PBS and PPT ends produces a blunt ended, linear dsDNA copy of the viral genome that includes long terminal repeats (LTRs) at both ends. Functionally, catalyzes viral DNA integration into the host chromosome, by performing a series of DNA cutting and joining reactions. This enzyme activity takes place after virion entry into a cell and reverse transcription of the RNA genome in dsDNA. The first step in the integration process is 3' processing. This step requires a complex comprising the viral genome, matrix protein, Vpr and integrase. This complex is called the pre-integration complex (PIC). The integrase protein removes 2 nucleotides from each 3' end of the viral DNA, leaving recessed CA OH's at the 3' ends. In the second step, the PIC enters cell nucleus. This process is mediated through integrase and Vpr proteins, and allows the virus to infect a non dividing cell. This ability to enter the nucleus is specific of lentiviruses, other retroviruses cannot and rely on cell division to access cell chromosomes. In the third step, termed strand transfer, the integrase protein joins the previously processed 3' ends to the 5' ends of strands of target cellular DNA at the site of integration. The 5'-ends are produced by integrase-catalyzed staggered cuts, 5 bp apart. A Y-shaped, gapped, recombination intermediate results, with the 5'-ends of the viral DNA strands and the 3' ends of target DNA strands remaining unjoined, flanking a gap of 5 bp. The last step is viral DNA integration into host chromosome. This involves host DNA repair synthesis in which the 5 bp gaps between the unjoined strands are filled in and then ligated. Since this process occurs at both cuts flanking the HIV genome, a 5 bp duplication of host DNA is produced at the ends of HIV-1 integration. Alternatively, Integrase may catalyze the excision of viral DNA just after strand transfer, this is termed disintegration. The polypeptide is Gag-Pol polyprotein (gag-pol) (Human immunodeficiency virus type 1 group M subtype D (isolate ELI) (HIV-1)).